The following is a 457-amino-acid chain: L-lysine-epsilon aminotransferase (457 aa).

Pyridoxal 5'-phosphate contacts are provided by Gly131 and Ala132. Arg172 and Gln278 together coordinate 2-oxoglutarate. Arg172 is a binding site for L-lysine. Position 278 (Gln278) interacts with pyridoxal 5'-phosphate. Lys304 bears the N6-(pyridoxal phosphate)lysine mark. Arg427 provides a ligand contact to 2-oxoglutarate.

Belongs to the class-III pyridoxal-phosphate-dependent aminotransferase family. Monomer. The cofactor is pyridoxal 5'-phosphate.

The catalysed reaction is L-lysine + 2-oxoglutarate = (S)-2-amino-6-oxohexanoate + L-glutamate. Its pathway is antibiotic biosynthesis; cephamycin C biosynthesis. Its activity is regulated as follows. Activity is induced in the presence of high concentrations of lysine, but not by L-alpha-aminoadipic acid. Not repressed by ammonium ions. Functionally, catalyzes the transfer of the terminal amino group of L-lysine to alpha-ketoglutarate to yield L-glutamate and 2-aminoadipate 6-semialdehyde ((S)-2-amino-6-oxohexanoate), which is spontaneously converted to the dehydrated form 1-piperideine 6-carboxylate. Shows a high specificity for L-lysine as substrate although L-ornithine can also be used, leading to the formation of an o-aminobenzaldehyde reactive compound. Only cis-oxaloacetate and pyruvate can replace alpha-ketoglutarate, but with very low efficiency. In Streptomyces clavuligerus, this protein is L-lysine-epsilon aminotransferase.